The sequence spans 386 residues: Porin PorA (386 aa).

Residues 1 to 35 (MKRTLGHALIIIGAALIVIAVLLPTFLVPRLRVIP) form the signal peptide. The segment covering 53–63 (DSSQLGKNEPT) has biased composition (polar residues). The interval 53 to 78 (DSSQLGKNEPTPNRKNDPRCKAETDE) is disordered. The span at 64–78 (PNRKNDPRCKAETDE) shows a compositional bias: basic and acidic residues.

It belongs to the PorA family.

The protein localises to the secreted. It localises to the cell wall. In terms of biological role, forms water-filled channels that favor the permeation of cations. The polypeptide is Porin PorA (Corynebacterium amycolatum).